The chain runs to 25 residues: Small ribosomal subunit protein eS32 (25 aa).

The interval 1 to 25 (MRAKWRKKRVRRLKRKRRKVRARSK) is disordered.

It belongs to the eukaryotic ribosomal protein eS32 family. In terms of assembly, component of the small ribosomal subunit.

This chain is Small ribosomal subunit protein eS32 (RPL41), found in Eremothecium gossypii (strain ATCC 10895 / CBS 109.51 / FGSC 9923 / NRRL Y-1056) (Yeast).